Here is a 375-residue protein sequence, read N- to C-terminus: Chaperone protein DnaJ (375 aa).

The 66-residue stretch at 5–70 (DFYEVLGVER…SKRAAYDQYG (66 aa)) folds into the J domain. A CR-type zinc finger spans residues 134–212 (GTTVSIRVPT…CHGEGRVEEY (79 aa)). Zn(2+)-binding residues include C147, C150, C164, C167, C186, C189, C200, and C203. CXXCXGXG motif repeat units lie at residues 147-154 (CKPCDGSG), 164-171 (CPTCGGIG), 186-193 (CPRCHGQG), and 200-207 (CNSCHGEG).

The protein belongs to the DnaJ family. In terms of assembly, homodimer. It depends on Zn(2+) as a cofactor.

The protein localises to the cytoplasm. Participates actively in the response to hyperosmotic and heat shock by preventing the aggregation of stress-denatured proteins and by disaggregating proteins, also in an autonomous, DnaK-independent fashion. Unfolded proteins bind initially to DnaJ; upon interaction with the DnaJ-bound protein, DnaK hydrolyzes its bound ATP, resulting in the formation of a stable complex. GrpE releases ADP from DnaK; ATP binding to DnaK triggers the release of the substrate protein, thus completing the reaction cycle. Several rounds of ATP-dependent interactions between DnaJ, DnaK and GrpE are required for fully efficient folding. Also involved, together with DnaK and GrpE, in the DNA replication of plasmids through activation of initiation proteins. The chain is Chaperone protein DnaJ from Pseudomonas entomophila (strain L48).